The chain runs to 544 residues: uncharacterized protein (544 aa).

14 consecutive transmembrane segments (helical) span residues 31–51 (ILVF…AALA), 52–72 (GSVL…IGLL), 84–104 (LPWM…QWLI), 116–136 (WGLF…YTTV), 162–182 (FAFS…IAAG), 191–211 (FGEL…WSAL), 230–250 (LAPL…AKSF), 257–277 (GFDY…GFGF), 318–338 (FLFV…TASI), 356–376 (TIAL…QALA), 383–403 (VIYF…WLVQ), 407–427 (VALL…AYLI), 450–470 (FFYA…LFLV), and 501–521 (FAVA…AIFY).

It belongs to the sodium:galactoside symporter (TC 2.A.2) family.

Its subcellular location is the cell membrane. This is an uncharacterized protein from Synechocystis sp. (strain ATCC 27184 / PCC 6803 / Kazusa).